Here is a 130-residue protein sequence, read N- to C-terminus: Acidic phospholipase A2 daboiatoxin B chain (130 aa).

An N-terminal signal peptide occupies residues 1-8 (MCLIGVEG). Disulfide bonds link Cys-34/Cys-123, Cys-36/Cys-52, Cys-51/Cys-103, Cys-57/Cys-130, Cys-58/Cys-96, Cys-65/Cys-89, and Cys-83/Cys-94. Ca(2+) is bound by residues Tyr-35, Gly-37, and Gly-39. Residue His-55 is part of the active site. A Ca(2+)-binding site is contributed by Asp-56. The active site involves Asp-97.

The protein belongs to the phospholipase A2 family. Group II subfamily. D49 sub-subfamily. In terms of assembly, heterodimer of an acidic protein having phospholipase A2 activity (B chain) and an A chain which weakly inhibits the B chain enzymatic activity but potentiates its lethal potency. It depends on Ca(2+) as a cofactor. In terms of tissue distribution, expressed by the venom gland.

The protein localises to the secreted. It catalyses the reaction a 1,2-diacyl-sn-glycero-3-phosphocholine + H2O = a 1-acyl-sn-glycero-3-phosphocholine + a fatty acid + H(+). Functionally, monomer: Snake venom phospholipase A2 (PLA2) that shows a high PLA2 activity (2110 umol/min/mg). Heterodimer (A and B chains): snake venom phospholipase A2 that shows a moderate PLA2 activity (1377 umol/min/mg). Acts as a presynaptic neurotoxin. In vivo, induces edema and produces neurotoxic symptoms in mice. It exhibits indirect hemolysis and a strong myonecrotic activity and is cytotoxic. PLA2 catalyzes the calcium-dependent hydrolysis of the 2-acyl groups in 3-sn-phosphoglycerides. The polypeptide is Acidic phospholipase A2 daboiatoxin B chain (Daboia siamensis (Eastern Russel's viper)).